The sequence spans 320 residues: MGRKRKHSETEAPAPVKKSDEPAPDRPKRTLLGWKDKSEGEAEKAKALTSSGFKNKEKVLVTCSRRISFRYRSLMLNIVSLLPHCKKDSKVEAKSSKGATLNELIELKNSNSCLFFECRKHKDLYMWMVKSPNGPSVKFLVKAVHAMEEMKLTGNHLKGSRPLLTFSSNFDKDAHWKLLKEMLTQVFGIPKEHRKSKPYHDHVFVFSIVDEHIWFRNYQISVPHNESDKIAKGGLDKMTLIEVGPRFCLNPIKIFAGSFGGPTLYENPLYVSPNQIRALEKRNKAGKFAKKIKAKTRKKMHELSNPLEPDEFADMWKDDE.

The disordered stretch occupies residues 1-40 (MGRKRKHSETEAPAPVKKSDEPAPDRPKRTLLGWKDKSEG). Residues 17–40 (KKSDEPAPDRPKRTLLGWKDKSEG) are compositionally biased toward basic and acidic residues. A Brix domain is found at 57–260 (EKVLVTCSRR…PIKIFAGSFG (204 aa)). The disordered stretch occupies residues 297 to 320 (RKKMHELSNPLEPDEFADMWKDDE). Residues 308 to 320 (EPDEFADMWKDDE) are compositionally biased toward acidic residues.

It belongs to the BRX1 family. In terms of tissue distribution, expressed in roots, rosette leaves, stems, flowers, siliques and seeds.

The protein localises to the nucleus. The protein resides in the nucleolus. In terms of biological role, involved in pre-rRNA processing and required for biogenesis of the large (60S) ribosomal subunit. Required for proper development. The polypeptide is Ribosome biogenesis protein BRX1 homolog 2 (Arabidopsis thaliana (Mouse-ear cress)).